The chain runs to 306 residues: Ribonuclease BN (306 aa).

Residues histidine 64, histidine 66, aspartate 68, histidine 69, histidine 141, aspartate 212, and histidine 270 each contribute to the Zn(2+) site. Aspartate 68 serves as the catalytic Proton acceptor.

Belongs to the RNase Z family. RNase BN subfamily. In terms of assembly, homodimer. Zn(2+) serves as cofactor.

In terms of biological role, zinc phosphodiesterase, which has both exoribonuclease and endoribonuclease activities. The chain is Ribonuclease BN from Klebsiella pneumoniae (strain 342).